The following is a 242-amino-acid chain: Protein LST7 (242 aa).

In terms of domain architecture, uDENN FLCN/SMCR8-type spans Ser48–Val212.

Required for the nitrogen-regulated transport of amino acid permeases GAP1 and PUT4 from the Golgi to the cell surface. The protein is Protein LST7 (LST7) of Saccharomyces cerevisiae (strain ATCC 204508 / S288c) (Baker's yeast).